The following is a 916-amino-acid chain: Protein translocase subunit SecA (916 aa).

ATP-binding positions include Q87, 105 to 109, and D512; that span reads GEGKT. The disordered stretch occupies residues 857-916; that stretch reads QHAEAPSMEQAVAGEEEELPEGPAPVVPLEPVRNEQKIGRNEPCPCGSGKKYKHCHGQLD. C900, C902, C911, and H912 together coordinate Zn(2+). Positions 906 to 916 are enriched in basic residues; that stretch reads KKYKHCHGQLD.

It belongs to the SecA family. As to quaternary structure, monomer and homodimer. Part of the essential Sec protein translocation apparatus which comprises SecA, SecYEG and auxiliary proteins SecDF-YajC and YidC. Zn(2+) serves as cofactor.

The protein localises to the cell inner membrane. It is found in the cytoplasm. The enzyme catalyses ATP + H2O + cellular proteinSide 1 = ADP + phosphate + cellular proteinSide 2.. Its function is as follows. Part of the Sec protein translocase complex. Interacts with the SecYEG preprotein conducting channel. Has a central role in coupling the hydrolysis of ATP to the transfer of proteins into and across the cell membrane, serving both as a receptor for the preprotein-SecB complex and as an ATP-driven molecular motor driving the stepwise translocation of polypeptide chains across the membrane. The polypeptide is Protein translocase subunit SecA (Pseudomonas aeruginosa (strain LESB58)).